We begin with the raw amino-acid sequence, 116 residues long: Large ribosomal subunit protein bL19 (116 aa).

This sequence belongs to the bacterial ribosomal protein bL19 family.

Its function is as follows. This protein is located at the 30S-50S ribosomal subunit interface and may play a role in the structure and function of the aminoacyl-tRNA binding site. This chain is Large ribosomal subunit protein bL19, found in Histophilus somni (strain 129Pt) (Haemophilus somnus).